Here is a 292-residue protein sequence, read N- to C-terminus: Ribosomal RNA small subunit methyltransferase H (292 aa).

S-adenosyl-L-methionine contacts are provided by residues 32–34 (GGH), Asp-51, Leu-87, Asp-101, and Gln-108.

It belongs to the methyltransferase superfamily. RsmH family.

It localises to the cytoplasm. It carries out the reaction cytidine(1402) in 16S rRNA + S-adenosyl-L-methionine = N(4)-methylcytidine(1402) in 16S rRNA + S-adenosyl-L-homocysteine + H(+). Its function is as follows. Specifically methylates the N4 position of cytidine in position 1402 (C1402) of 16S rRNA. The polypeptide is Ribosomal RNA small subunit methyltransferase H (Pseudothermotoga lettingae (strain ATCC BAA-301 / DSM 14385 / NBRC 107922 / TMO) (Thermotoga lettingae)).